Consider the following 256-residue polypeptide: Cell division protein DivIB (256 aa).

At 1–23 (MSKDLISTDEYIKIKKKRKRIKK) the chain is on the cytoplasmic side. Residues 24 to 44 (IVVLFIFLISILVTLCLKIPY) traverse the membrane as a helical segment. Residues 45–113 (FNIESIEIKG…NKLQIYVKER (69 aa)) enclose the POTRA domain. At 45–256 (FNIESIEIKG…EGNPVFYIEK (212 aa)) the chain is on the extracellular side.

Belongs to the FtsQ/DivIB family. DivIB subfamily.

The protein resides in the cell membrane. Its function is as follows. Cell division protein that may be involved in stabilizing or promoting the assembly of the division complex. The polypeptide is Cell division protein DivIB (Clostridium botulinum (strain Hall / ATCC 3502 / NCTC 13319 / Type A)).